A 313-amino-acid chain; its full sequence is Ribosomal RNA small subunit methyltransferase H (313 aa).

S-adenosyl-L-methionine is bound by residues 35 to 37 (GGH), Asp-55, Phe-79, Asp-100, and Gln-107.

Belongs to the methyltransferase superfamily. RsmH family.

The protein localises to the cytoplasm. The enzyme catalyses cytidine(1402) in 16S rRNA + S-adenosyl-L-methionine = N(4)-methylcytidine(1402) in 16S rRNA + S-adenosyl-L-homocysteine + H(+). Its function is as follows. Specifically methylates the N4 position of cytidine in position 1402 (C1402) of 16S rRNA. In Burkholderia thailandensis (strain ATCC 700388 / DSM 13276 / CCUG 48851 / CIP 106301 / E264), this protein is Ribosomal RNA small subunit methyltransferase H.